Reading from the N-terminus, the 81-residue chain is Photosystem I iron-sulfur center (81 aa).

4Fe-4S ferredoxin-type domains are found at residues 2 to 31 and 37 to 68; these read SHSV…MVPW and GQIA…IRVY. Positions 11, 14, 17, 21, 48, 51, 54, and 58 each coordinate [4Fe-4S] cluster.

The cyanobacterial PSI reaction center is composed of one copy each of PsaA,B,C,D,E,F,I,J,K,L,M and X, and forms trimeric complexes. [4Fe-4S] cluster serves as cofactor.

The protein resides in the cellular thylakoid membrane. The enzyme catalyses reduced [plastocyanin] + hnu + oxidized [2Fe-2S]-[ferredoxin] = oxidized [plastocyanin] + reduced [2Fe-2S]-[ferredoxin]. Functionally, apoprotein for the two 4Fe-4S centers FA and FB of photosystem I (PSI); essential for photochemical activity. FB is the terminal electron acceptor of PSI, donating electrons to ferredoxin. The C-terminus interacts with PsaA/B/D and helps assemble the protein into the PSI complex. Required for binding of PsaD and PsaE to PSI. PSI is a plastocyanin/cytochrome c6-ferredoxin oxidoreductase, converting photonic excitation into a charge separation, which transfers an electron from the donor P700 chlorophyll pair to the spectroscopically characterized acceptors A0, A1, FX, FA and FB in turn. The sequence is that of Photosystem I iron-sulfur center from Synechococcus sp. (strain RCC307).